A 152-amino-acid chain; its full sequence is Superoxide dismutase [Cu-Zn] (152 aa).

Positions 45, 47, and 62 each coordinate Cu cation. A disulfide bond links cysteine 56 and cysteine 145. Residues histidine 62, histidine 70, histidine 79, and aspartate 82 each contribute to the Zn(2+) site. Histidine 119 lines the Cu cation pocket.

Belongs to the Cu-Zn superoxide dismutase family. As to quaternary structure, homodimer. The cofactor is Cu cation. It depends on Zn(2+) as a cofactor.

It is found in the cytoplasm. The enzyme catalyses 2 superoxide + 2 H(+) = H2O2 + O2. In terms of biological role, destroys radicals which are normally produced within the cells and which are toxic to biological systems. The sequence is that of Superoxide dismutase [Cu-Zn] (SODCC) from Panax ginseng (Korean ginseng).